The sequence spans 222 residues: Endonuclease V (222 aa).

2 residues coordinate Mg(2+): D34 and D102.

The protein belongs to the endonuclease V family. It depends on Mg(2+) as a cofactor.

The protein localises to the cytoplasm. It carries out the reaction Endonucleolytic cleavage at apurinic or apyrimidinic sites to products with a 5'-phosphate.. DNA repair enzyme involved in the repair of deaminated bases. Selectively cleaves double-stranded DNA at the second phosphodiester bond 3' to a deoxyinosine leaving behind the intact lesion on the nicked DNA. This is Endonuclease V from Proteus mirabilis (strain HI4320).